Consider the following 719-residue polypeptide: Polyribonucleotide nucleotidyltransferase (719 aa).

The Mg(2+) site is built by Asp507 and Asp513. The KH domain maps to 573–633 (PKLELFSVDP…EQIKAAKDYI (61 aa)). Positions 658-719 (GQEFQGIVKK…NGKISVDLCE (62 aa)) constitute an S1 motif domain.

This sequence belongs to the polyribonucleotide nucleotidyltransferase family. It depends on Mg(2+) as a cofactor.

It is found in the cytoplasm. It carries out the reaction RNA(n+1) + phosphate = RNA(n) + a ribonucleoside 5'-diphosphate. Involved in mRNA degradation. Catalyzes the phosphorolysis of single-stranded polyribonucleotides processively in the 3'- to 5'-direction. In Campylobacter jejuni subsp. jejuni serotype O:2 (strain ATCC 700819 / NCTC 11168), this protein is Polyribonucleotide nucleotidyltransferase.